A 208-amino-acid chain; its full sequence is Imidazoleglycerol-phosphate dehydratase (208 aa).

The protein belongs to the imidazoleglycerol-phosphate dehydratase family.

The protein localises to the cytoplasm. It catalyses the reaction D-erythro-1-(imidazol-4-yl)glycerol 3-phosphate = 3-(imidazol-4-yl)-2-oxopropyl phosphate + H2O. The protein operates within amino-acid biosynthesis; L-histidine biosynthesis; L-histidine from 5-phospho-alpha-D-ribose 1-diphosphate: step 6/9. In Psychrobacter sp. (strain PRwf-1), this protein is Imidazoleglycerol-phosphate dehydratase.